We begin with the raw amino-acid sequence, 228 residues long: Ribose-5-phosphate isomerase A (228 aa).

Residues 28–31, 84–87, and 97–100 contribute to the substrate site; these read TGST, DGAD, and KGGG. The active-site Proton acceptor is Glu106. A substrate-binding site is contributed by Lys124.

The protein belongs to the ribose 5-phosphate isomerase family. In terms of assembly, homodimer.

It catalyses the reaction aldehydo-D-ribose 5-phosphate = D-ribulose 5-phosphate. It participates in carbohydrate degradation; pentose phosphate pathway; D-ribose 5-phosphate from D-ribulose 5-phosphate (non-oxidative stage): step 1/1. Its function is as follows. Catalyzes the reversible conversion of ribose-5-phosphate to ribulose 5-phosphate. This is Ribose-5-phosphate isomerase A from Levilactobacillus brevis (strain ATCC 367 / BCRC 12310 / CIP 105137 / JCM 1170 / LMG 11437 / NCIMB 947 / NCTC 947) (Lactobacillus brevis).